The following is a 72-amino-acid chain: Crustacean hyperglycemic hormone B (72 aa).

Pyrrolidone carboxylic acid is present on Gln1. Phe3 carries the D-phenylalanine; in form CHHB-II modification. 3 cysteine pairs are disulfide-bonded: Cys7–Cys43, Cys23–Cys39, and Cys26–Cys52. Val72 bears the Valine amide mark.

Stereoinversion of L-Phe (in CHHB-I) to D-Phe (in CHHB-II).

Its subcellular location is the secreted. Hormone found in the sinus gland of isopods and decapods which controls the blood sugar level. Has a secretagogue action over the amylase released from the midgut gland. May act as a stress hormone and may be involved in the control of molting and reproduction. This chain is Crustacean hyperglycemic hormone B, found in Cherax destructor (Common yabby crayfish).